A 326-amino-acid chain; its full sequence is Adenine deaminase (326 aa).

Zn(2+)-binding residues include His14, His16, and His194. Catalysis depends on Glu197, which acts as the Proton donor. A Zn(2+)-binding site is contributed by Asp275. Substrate is bound at residue Asp276.

It belongs to the metallo-dependent hydrolases superfamily. Adenosine and AMP deaminases family. Adenine deaminase type 2 subfamily. It depends on Zn(2+) as a cofactor.

It carries out the reaction adenine + H2O + H(+) = hypoxanthine + NH4(+). Its function is as follows. Catalyzes the hydrolytic deamination of adenine to hypoxanthine. Plays an important role in the purine salvage pathway and in nitrogen catabolism. This Crocosphaera subtropica (strain ATCC 51142 / BH68) (Cyanothece sp. (strain ATCC 51142)) protein is Adenine deaminase.